The sequence spans 548 residues: Alpha-humulene synthase (548 aa).

The Mg(2+) site is built by aspartate 302, aspartate 306, and glutamate 453. Residues 302-306 (DDIYD) carry the DDXXD motif motif.

This sequence belongs to the terpene synthase family. As to expression, mostly expressed in rhizomes.

It catalyses the reaction (2E,6E)-farnesyl diphosphate = alpha-humulene + diphosphate. Functionally, catalyzes the formation of alpha-humulene in the first step of zerumbone biosynthesis, a highly promising multi-anticancer agent. Also mediates formation of beta-caryophyllene at a much lower level. This is Alpha-humulene synthase (ZSS1) from Zingiber zerumbet (Shampoo ginger).